A 301-amino-acid chain; its full sequence is Haloalkane dehalogenase (301 aa).

Asp123 (nucleophile) is an active-site residue. The Proton donor role is filled by Asp250. The active-site Proton acceptor is His279.

This sequence belongs to the haloalkane dehalogenase family. Type 1 subfamily. Monomer.

The enzyme catalyses 1-haloalkane + H2O = a halide anion + a primary alcohol + H(+). Its function is as follows. Catalyzes hydrolytic cleavage of carbon-halogen bonds in halogenated aliphatic compounds, leading to the formation of the corresponding primary alcohols, halide ions and protons. In Phenylobacterium zucineum (strain HLK1), this protein is Haloalkane dehalogenase.